A 305-amino-acid chain; its full sequence is NADH-ubiquinone oxidoreductase chain 1 (305 aa).

8 helical membrane passes run 3–23 (WVAV…VGFY), 71–91 (VGPF…GWLL), 99–119 (VFYV…VYGV), 145–165 (YEIP…VFMF), 175–195 (LFFF…CMLA), 221–241 (GGGF…SSVM), 246–266 (FFGG…IFFV), and 285–305 (WTVL…LVGV).

This sequence belongs to the complex I subunit 1 family.

The protein localises to the mitochondrion inner membrane. It carries out the reaction a ubiquinone + NADH + 5 H(+)(in) = a ubiquinol + NAD(+) + 4 H(+)(out). Its function is as follows. Core subunit of the mitochondrial membrane respiratory chain NADH dehydrogenase (Complex I) that is believed to belong to the minimal assembly required for catalysis. Complex I functions in the transfer of electrons from NADH to the respiratory chain. The immediate electron acceptor for the enzyme is believed to be ubiquinone. This is NADH-ubiquinone oxidoreductase chain 1 (ND1) from Mytilus edulis (Blue mussel).